Here is an 84-residue protein sequence, read N- to C-terminus: Transcription elongation factor 1 homolog (84 aa).

Zn(2+) is bound by residues C26, C29, C50, and C53.

This sequence belongs to the ELOF1 family.

The protein resides in the nucleus. In terms of biological role, transcription elongation factor implicated in the maintenance of proper chromatin structure in actively transcribed regions. In Caenorhabditis elegans, this protein is Transcription elongation factor 1 homolog.